The chain runs to 815 residues: Leucine--tRNA ligase (815 aa).

The 'HIGH' region motif lies at 42–52; it reads PYPSGRLHMGH. A 'KMSKS' region motif is present at residues 574–578; it reads KMSKS. Lys-577 contacts ATP.

It belongs to the class-I aminoacyl-tRNA synthetase family.

It localises to the cytoplasm. It catalyses the reaction tRNA(Leu) + L-leucine + ATP = L-leucyl-tRNA(Leu) + AMP + diphosphate. This is Leucine--tRNA ligase from Marinomonas sp. (strain MWYL1).